Reading from the N-terminus, the 390-residue chain is 8-amino-7-oxononanoate synthase (390 aa).

Residue R19 participates in substrate binding. A pyridoxal 5'-phosphate-binding site is contributed by 106–107 (GY). Substrate is bound at residue H131. Pyridoxal 5'-phosphate-binding residues include S176, H204, and T233. K236 is modified (N6-(pyridoxal phosphate)lysine). Position 350 (T350) interacts with substrate.

This sequence belongs to the class-II pyridoxal-phosphate-dependent aminotransferase family. BioF subfamily. Homodimer. The cofactor is pyridoxal 5'-phosphate.

It catalyses the reaction 6-carboxyhexanoyl-[ACP] + L-alanine + H(+) = (8S)-8-amino-7-oxononanoate + holo-[ACP] + CO2. It participates in cofactor biosynthesis; biotin biosynthesis. Catalyzes the decarboxylative condensation of pimeloyl-[acyl-carrier protein] and L-alanine to produce 8-amino-7-oxononanoate (AON), [acyl-carrier protein], and carbon dioxide. In Pseudomonas putida (strain W619), this protein is 8-amino-7-oxononanoate synthase.